Reading from the N-terminus, the 206-residue chain is Uridine kinase (206 aa).

Gly-11 to Ser-18 lines the ATP pocket.

This sequence belongs to the uridine kinase family.

The protein localises to the cytoplasm. It catalyses the reaction uridine + ATP = UMP + ADP + H(+). The catalysed reaction is cytidine + ATP = CMP + ADP + H(+). It functions in the pathway pyrimidine metabolism; CTP biosynthesis via salvage pathway; CTP from cytidine: step 1/3. It participates in pyrimidine metabolism; UMP biosynthesis via salvage pathway; UMP from uridine: step 1/1. This chain is Uridine kinase, found in Clostridium botulinum (strain Kyoto / Type A2).